Consider the following 87-residue polypeptide: Phosphoribosyl-ATP pyrophosphatase (87 aa).

The protein belongs to the PRA-PH family.

The protein resides in the cytoplasm. It carries out the reaction 1-(5-phospho-beta-D-ribosyl)-ATP + H2O = 1-(5-phospho-beta-D-ribosyl)-5'-AMP + diphosphate + H(+). The protein operates within amino-acid biosynthesis; L-histidine biosynthesis; L-histidine from 5-phospho-alpha-D-ribose 1-diphosphate: step 2/9. The sequence is that of Phosphoribosyl-ATP pyrophosphatase from Thermobifida fusca (strain YX).